The sequence spans 206 residues: 5,6-dimethylbenzimidazole synthase (206 aa).

FMN contacts are provided by residues 18-22, Ser46, Leu95, and Ser153; that span reads RRDVR.

The protein belongs to the BluB family. In terms of assembly, homooctamer.

It catalyses the reaction FMNH2 + O2 = dialurate + 5,6-dimethylbenzimidazole + D-erythrose 4-phosphate + H(+). In terms of biological role, involved in the biosynthesis of cobalamin (vitamin B12). Catalyzes the oxidative fragmentation and contraction of the isoalloxazine heterocycle and the cleavage of the ribityl tail of FMNH(2) to form 5,6-dimethylbenzimidazole (DMB) and D-erythrose 4-phosphate (E4P). NAD(P)H is only required initially to reduce FMN and oxygen drives the oxidative fragmentation. This Rhodobacter capsulatus (Rhodopseudomonas capsulata) protein is 5,6-dimethylbenzimidazole synthase (bluB).